Consider the following 728-residue polypeptide: Catalase-peroxidase (728 aa).

Residues 91 to 218 (WHSAGTYRTA…LAAVQMGLIY (128 aa)) constitute a cross-link (tryptophyl-tyrosyl-methioninium (Trp-Tyr) (with M-244)). Residue histidine 92 is the Proton acceptor of the active site. A cross-link (tryptophyl-tyrosyl-methioninium (Tyr-Met) (with W-91)) is located at residues 218 to 244 (YVNPEGPDGNPDPVAAARDIRDTFARM). Histidine 259 is a binding site for heme b.

The protein belongs to the peroxidase family. Peroxidase/catalase subfamily. As to quaternary structure, homodimer or homotetramer. It depends on heme b as a cofactor. Formation of the three residue Trp-Tyr-Met cross-link is important for the catalase, but not the peroxidase activity of the enzyme.

It catalyses the reaction H2O2 + AH2 = A + 2 H2O. It carries out the reaction 2 H2O2 = O2 + 2 H2O. Its function is as follows. Bifunctional enzyme with both catalase and broad-spectrum peroxidase activity. The chain is Catalase-peroxidase from Burkholderia thailandensis (strain ATCC 700388 / DSM 13276 / CCUG 48851 / CIP 106301 / E264).